The primary structure comprises 847 residues: Vacuolar membrane protease (847 aa).

The Cytoplasmic portion of the chain corresponds to 1–17; sequence MQFGKSLLKHVYTRTFK. Residues 18 to 38 form a helical membrane-spanning segment; the sequence is SSLTCSIFAFTLLMIFFVLDW. At 39-348 the chain is on the vacuolar side; sequence KRMNVYPRLD…GSYWQINLNL (310 aa). Residues H146 and D158 each coordinate Zn(2+). The Proton acceptor role is filled by E190. Position 191 (E191) interacts with Zn(2+). N208 carries N-linked (GlcNAc...) asparagine glycosylation. E216 contacts Zn(2+). The N-linked (GlcNAc...) asparagine glycan is linked to N274. H291 provides a ligand contact to Zn(2+). Residues 349 to 369 form a helical membrane-spanning segment; it reads HLFLNVVFLIACPAILFMCLF. Residues 370-381 lie on the Cytoplasmic side of the membrane; the sequence is RFPSLYAQLKKP. A helical membrane pass occupies residues 382-402; that stretch reads CYLICFTLSSLFVLIFDYVVV. Residues 403 to 415 are Vacuolar-facing; sequence QSLTKLNPYVIHS. The helical transmembrane segment at 416-436 threads the bilayer; sequence SPDAVLAFFFLTNLLGLVYSF. Residues 437 to 454 are Cytoplasmic-facing; that stretch reads RYVATHSRMSNEELSCIE. Residues 455–475 traverse the membrane as a helical segment; it reads IVLIWYVSMFWYISLLIATLT. The Vacuolar portion of the chain corresponds to 476–482; sequence SIVRGLG. Residues 483–503 form a helical membrane-spanning segment; sequence SLYFVNFGFFCSFFCCILTLI. Residues 504–560 are Cytoplasmic-facing; it reads RVRYFVDRMVTINRPANPEQMPLVQSTSGNAYGTSRYPQHRLKAVVSKSASVKLNDN. A helical transmembrane segment spans residues 561–581; it reads LWSVLFFSCLVPLPLFTCYNL. Residues 582–605 lie on the Vacuolar side of the membrane; it reads LSEVFIPAVHQSLIDGPYSNTCYK. Residues 606-626 traverse the membrane as a helical segment; it reads FAVILVFMAIINSSPFVFRAL. At 627–630 the chain is on the cytoplasmic side; it reads SKKS. Residues 631 to 651 traverse the membrane as a helical segment; it reads SAILLMLWVSLLFNILRAEPF. At 652–847 the chain is on the vacuolar side; it reads NEKAPIKFRV…LLKMSKTHVM (196 aa). N726, N734, N800, and N834 each carry an N-linked (GlcNAc...) asparagine glycan.

The protein belongs to the peptidase M28 family. Zn(2+) is required as a cofactor.

The protein localises to the vacuole membrane. Its function is as follows. May be involved in vacuolar sorting and osmoregulation. In Schizosaccharomyces japonicus (strain yFS275 / FY16936) (Fission yeast), this protein is Vacuolar membrane protease.